A 305-amino-acid chain; its full sequence is Epoxyqueuosine reductase (305 aa).

Asp128 (proton donor) is an active-site residue. Residues 170–202 (LSLTSDTPHAKYCGTCRKCLDICPTKAIVHPFV) form the 4Fe-4S ferredoxin-type domain. Positions 182, 185, 188, 192, 208, 236, 239, and 243 each coordinate [4Fe-4S] cluster.

It belongs to the QueG family. Monomer. It depends on cob(II)alamin as a cofactor. The cofactor is [4Fe-4S] cluster.

It is found in the cytoplasm. It catalyses the reaction epoxyqueuosine(34) in tRNA + AH2 = queuosine(34) in tRNA + A + H2O. Its pathway is tRNA modification; tRNA-queuosine biosynthesis. Catalyzes the conversion of epoxyqueuosine (oQ) to queuosine (Q), which is a hypermodified base found in the wobble positions of tRNA(Asp), tRNA(Asn), tRNA(His) and tRNA(Tyr). The sequence is that of Epoxyqueuosine reductase from Atelocyanobacterium thalassa (isolate ALOHA).